Reading from the N-terminus, the 426-residue chain is Gamma-glutamyl phosphate reductase (426 aa).

Belongs to the gamma-glutamyl phosphate reductase family.

It is found in the cytoplasm. It carries out the reaction L-glutamate 5-semialdehyde + phosphate + NADP(+) = L-glutamyl 5-phosphate + NADPH + H(+). It functions in the pathway amino-acid biosynthesis; L-proline biosynthesis; L-glutamate 5-semialdehyde from L-glutamate: step 2/2. Functionally, catalyzes the NADPH-dependent reduction of L-glutamate 5-phosphate into L-glutamate 5-semialdehyde and phosphate. The product spontaneously undergoes cyclization to form 1-pyrroline-5-carboxylate. The protein is Gamma-glutamyl phosphate reductase of Paracidovorax citrulli (strain AAC00-1) (Acidovorax citrulli).